The following is a 359-amino-acid chain: Alkanal monooxygenase alpha chain (359 aa).

The protein belongs to the bacterial luciferase oxidoreductase family. Heterodimer of an alpha and a beta chain.

It catalyses the reaction a long-chain fatty aldehyde + FMNH2 + O2 = a long-chain fatty acid + hnu + FMN + H2O + 2 H(+). Functionally, light-emitting reaction in luminous bacteria. This is Alkanal monooxygenase alpha chain (luxA) from Photorhabdus laumondii subsp. laumondii (strain DSM 15139 / CIP 105565 / TT01) (Photorhabdus luminescens subsp. laumondii).